A 163-amino-acid polypeptide reads, in one-letter code: MPSFDIVSEVDLQEARNGVDNAVREVESRFDFRGVEATIELNDANKTIKVLSESDFQVNQLLDILRAKLLKRGIEGASLDVPDEFVHSGKTWYVEAKLKQGIESAVQKKIVKLIKDSKLKVQAQIQGEEIRVTGKSRDDLQSVMALVRGGDLGQPFQFKNFRD.

Belongs to the YajQ family.

Its function is as follows. Nucleotide-binding protein. This Salmonella agona (strain SL483) protein is Nucleotide-binding protein YajQ.